The following is a 169-amino-acid chain: Small ribosomal subunit protein bS16 (169 aa).

Residues 114–169 (AEGPTAEAITEKRRKAKEEAEAKAAAEAEAAEKAEAEAAEKAAAEAAEESEEASAE) are disordered. The segment covering 129–156 (AKEEAEAKAAAEAEAAEKAEAEAAEKAA) has biased composition (basic and acidic residues). Over residues 159–169 (AAEESEEASAE) the composition is skewed to acidic residues.

It belongs to the bacterial ribosomal protein bS16 family.

The polypeptide is Small ribosomal subunit protein bS16 (Corynebacterium urealyticum (strain ATCC 43042 / DSM 7109)).